The sequence spans 390 residues: Glutamyl-tRNA reductase (390 aa).

Substrate contacts are provided by residues 46-49 (TCNR), S96, 101-103 (EAQ), and Q107. C47 serves as the catalytic Nucleophile. An NADP(+)-binding site is contributed by 176–181 (GAGEMA).

Belongs to the glutamyl-tRNA reductase family. As to quaternary structure, homodimer.

It carries out the reaction (S)-4-amino-5-oxopentanoate + tRNA(Glu) + NADP(+) = L-glutamyl-tRNA(Glu) + NADPH + H(+). It functions in the pathway porphyrin-containing compound metabolism; protoporphyrin-IX biosynthesis; 5-aminolevulinate from L-glutamyl-tRNA(Glu): step 1/2. Functionally, catalyzes the NADPH-dependent reduction of glutamyl-tRNA(Glu) to glutamate 1-semialdehyde (GSA). The protein is Glutamyl-tRNA reductase of Thermus thermophilus (strain ATCC BAA-163 / DSM 7039 / HB27).